A 365-amino-acid chain; its full sequence is Inositol 4-methyltransferase (365 aa).

Residue Asp232 coordinates S-adenosyl-L-methionine. The Proton acceptor role is filled by His270.

The protein belongs to the class I-like SAM-binding methyltransferase superfamily. Cation-independent O-methyltransferase family. Leaves and roots. The levels found in the leaves are 25 times greater than in the roots.

The catalysed reaction is myo-inositol + S-adenosyl-L-methionine = 1D-4-O-methyl-myo-inositol + S-adenosyl-L-homocysteine + H(+). Its pathway is polyol metabolism; myo-inositol metabolism. Catalyzes the methylation of myo-inositol into ononitol (1D-4-O-methyl myo-inositol), the first step in the biosynthesis of the cyclic sugar pinitol which has osmoprotective properties. The polypeptide is Inositol 4-methyltransferase (IMT1) (Mesembryanthemum crystallinum (Common ice plant)).